We begin with the raw amino-acid sequence, 247 residues long: Cytochrome c oxidase subunit 2 (247 aa).

The signal sequence occupies residues 1-11 (MFYLLNSIIMN). Residues 12–38 (DVPTPYGMYFQDSATPNQEGILELHDN) are Mitochondrial intermembrane-facing. The helical transmembrane segment at 39–59 (IMFYLFIILGLVSWLLFTIVR) threads the bilayer. Over 60-78 (TYSKNPIAYKYIKHGQTIE) the chain is Mitochondrial matrix. A helical transmembrane segment spans residues 79 to 101 (IIWTIFPAVILLIIAFPSFILLY). The Mitochondrial intermembrane segment spans residues 102–247 (LCDEVISPAM…PAFLEWLNEQ (146 aa)). Cu cation contacts are provided by His182, Cys217, Glu219, Cys221, His225, and Met228. Glu219 serves as a coordination point for Mg(2+).

The protein belongs to the cytochrome c oxidase subunit 2 family. Component of the cytochrome c oxidase (complex IV, CIV), a multisubunit enzyme composed of a catalytic core of 3 subunits and several supernumerary subunits. The complex exists as a monomer or a dimer and forms supercomplexes (SCs) in the inner mitochondrial membrane with ubiquinol-cytochrome c oxidoreductase (cytochrome b-c1 complex, complex III, CIII). It depends on Cu cation as a cofactor. The signal sequence of COX2 is processed by IMP1.

It localises to the mitochondrion inner membrane. It carries out the reaction 4 Fe(II)-[cytochrome c] + O2 + 8 H(+)(in) = 4 Fe(III)-[cytochrome c] + 2 H2O + 4 H(+)(out). Component of the cytochrome c oxidase, the last enzyme in the mitochondrial electron transport chain which drives oxidative phosphorylation. The respiratory chain contains 3 multisubunit complexes succinate dehydrogenase (complex II, CII), ubiquinol-cytochrome c oxidoreductase (cytochrome b-c1 complex, complex III, CIII) and cytochrome c oxidase (complex IV, CIV), that cooperate to transfer electrons derived from NADH and succinate to molecular oxygen, creating an electrochemical gradient over the inner membrane that drives transmembrane transport and the ATP synthase. Cytochrome c oxidase is the component of the respiratory chain that catalyzes the reduction of oxygen to water. Electrons originating from reduced cytochrome c in the intermembrane space (IMS) are transferred via the dinuclear copper A center (CU(A)) of subunit 2 and heme A of subunit 1 to the active site in subunit 1, a binuclear center (BNC) formed by heme A3 and copper B (CU(B)). The BNC reduces molecular oxygen to 2 water molecules using 4 electrons from cytochrome c in the IMS and 4 protons from the mitochondrial matrix. The chain is Cytochrome c oxidase subunit 2 (COX2) from Kluyveromyces lactis (strain ATCC 8585 / CBS 2359 / DSM 70799 / NBRC 1267 / NRRL Y-1140 / WM37) (Yeast).